Reading from the N-terminus, the 367-residue chain is Flagellar P-ring protein (367 aa).

The signal sequence occupies residues 1 to 22 (MRRMLVIRWILAIHLIATQVFA).

Belongs to the FlgI family. In terms of assembly, the basal body constitutes a major portion of the flagellar organelle and consists of four rings (L,P,S, and M) mounted on a central rod.

It localises to the periplasm. It is found in the bacterial flagellum basal body. In terms of biological role, assembles around the rod to form the L-ring and probably protects the motor/basal body from shearing forces during rotation. The protein is Flagellar P-ring protein of Legionella pneumophila subsp. pneumophila (strain Philadelphia 1 / ATCC 33152 / DSM 7513).